The primary structure comprises 445 residues: N-succinylarginine dihydrolase (445 aa).

Substrate-binding positions include 19–28 (AGLSFGNVAS), N110, and 137–138 (HR). E174 is a catalytic residue. R214 lines the substrate pocket. The active site involves H250. The substrate site is built by D252 and N363. The active-site Nucleophile is the C369.

It belongs to the succinylarginine dihydrolase family. As to quaternary structure, homodimer.

The catalysed reaction is N(2)-succinyl-L-arginine + 2 H2O + 2 H(+) = N(2)-succinyl-L-ornithine + 2 NH4(+) + CO2. It functions in the pathway amino-acid degradation; L-arginine degradation via AST pathway; L-glutamate and succinate from L-arginine: step 2/5. In terms of biological role, catalyzes the hydrolysis of N(2)-succinylarginine into N(2)-succinylornithine, ammonia and CO(2). The chain is N-succinylarginine dihydrolase from Shewanella piezotolerans (strain WP3 / JCM 13877).